Reading from the N-terminus, the 123-residue chain is Transmembrane protein 254 (123 aa).

At alanine 2 the chain carries N-acetylalanine. The next 3 membrane-spanning stretches (helical) occupy residues 15 to 35, 61 to 81, and 95 to 115; these read LFWFTVITLSFGYYTWVVFWP, LCNGYWLAWLIHVGESLYAIV, and LLWFLQTFFFGIASLTILIAY.

The protein localises to the membrane. The polypeptide is Transmembrane protein 254 (TMEM254) (Homo sapiens (Human)).